We begin with the raw amino-acid sequence, 259 residues long: Type III pantothenate kinase (259 aa).

6–13 (DVGNTNIV) is an ATP binding site. Residues Tyr-100 and 107 to 110 (GADR) contribute to the substrate site. Asp-109 functions as the Proton acceptor in the catalytic mechanism. Asp-129 provides a ligand contact to K(+). Residue Thr-132 coordinates ATP. Position 184 (Thr-184) interacts with substrate.

The protein belongs to the type III pantothenate kinase family. Homodimer. Requires NH4(+) as cofactor. K(+) is required as a cofactor.

It is found in the cytoplasm. It catalyses the reaction (R)-pantothenate + ATP = (R)-4'-phosphopantothenate + ADP + H(+). Its pathway is cofactor biosynthesis; coenzyme A biosynthesis; CoA from (R)-pantothenate: step 1/5. Catalyzes the phosphorylation of pantothenate (Pan), the first step in CoA biosynthesis. The chain is Type III pantothenate kinase from Clostridium perfringens (strain ATCC 13124 / DSM 756 / JCM 1290 / NCIMB 6125 / NCTC 8237 / Type A).